A 358-amino-acid chain; its full sequence is Chorismate synthase (358 aa).

Residue R46 coordinates NADP(+). FMN contacts are provided by residues 123–125 (RSS), 235–236 (NA), G275, 290–294 (KATPS), and R316.

Belongs to the chorismate synthase family. In terms of assembly, homotetramer. The cofactor is FMNH2.

It carries out the reaction 5-O-(1-carboxyvinyl)-3-phosphoshikimate = chorismate + phosphate. The protein operates within metabolic intermediate biosynthesis; chorismate biosynthesis; chorismate from D-erythrose 4-phosphate and phosphoenolpyruvate: step 7/7. Catalyzes the anti-1,4-elimination of the C-3 phosphate and the C-6 proR hydrogen from 5-enolpyruvylshikimate-3-phosphate (EPSP) to yield chorismate, which is the branch point compound that serves as the starting substrate for the three terminal pathways of aromatic amino acid biosynthesis. This reaction introduces a second double bond into the aromatic ring system. This Aliarcobacter butzleri (strain RM4018) (Arcobacter butzleri) protein is Chorismate synthase.